Here is a 90-residue protein sequence, read N- to C-terminus: Small ribosomal subunit protein uS15 (90 aa).

This sequence belongs to the universal ribosomal protein uS15 family. Part of the 30S ribosomal subunit. Forms a bridge to the 50S subunit in the 70S ribosome, contacting the 23S rRNA.

Functionally, one of the primary rRNA binding proteins, it binds directly to 16S rRNA where it helps nucleate assembly of the platform of the 30S subunit by binding and bridging several RNA helices of the 16S rRNA. Forms an intersubunit bridge (bridge B4) with the 23S rRNA of the 50S subunit in the ribosome. This chain is Small ribosomal subunit protein uS15, found in Helicobacter hepaticus (strain ATCC 51449 / 3B1).